Consider the following 687-residue polypeptide: E3 ubiquitin-protein ligase RNF19B (687 aa).

The interval 1 to 294 is required for ubiquitin ligase activity and for protection against staurosporin-induced cell death; the sequence is MRLRNDCLVR…VCGCEFCWLC (294 aa). A disordered region spans residues 53–88; the sequence is RTRAAPEPSVPSPPPSPPPPPPPPVSVPPPPSSPGG. Pro residues predominate over residues 60 to 85; sequence PSVPSPPPSPPPPPPPPVSVPPPPSS. Residues 91–313 form a TRIAD supradomain region; the sequence is SLIECPLCLV…LSPSGCTFWG (223 aa). The Zn(2+) site is built by Cys-95, Cys-98, Cys-118, Cys-121, Cys-182, Cys-187, Cys-204, Cys-209, Cys-214, Cys-217, His-222, Cys-227, Cys-263, and Cys-266. The RING-type 1 zinc finger occupies 95 to 144; the sequence is CPLCLVRQPPEEIPELLSCRHRSCLRCLRQYLRIEICESRVNLRCPECAE. The IBR-type zinc-finger motif lies at 161 to 227; sequence TRKYEEFLLR…KHVWHPNQTC (67 aa). The RING-type 2; atypical zinc-finger motif lies at 263–294; sequence CPRCSAYIIKMNDGSCNHMTCSVCGCEFCWLC. Cys-278 is a catalytic residue. Positions 283, 286, 291, 294, 302, and 309 each coordinate Zn(2+). The next 2 helical transmembrane spans lie at 330-350 and 391-411; these read LIGAPVGISLIAGIAIPAMVI and VVAAVSVGIGVPIMLAYVYGV. The interval 618-662 is disordered; sequence SIRSDLESSDAQSDDVPDLASEEYDSPHLFPPSPSNALQESPPHR. The segment covering 629 to 641 has biased composition (acidic residues); the sequence is QSDDVPDLASEEY.

The protein belongs to the RBR family. RNF19 subfamily. Interacts with UBE2L3, UBE2L6 and UCKL1.

Its subcellular location is the cytoplasmic granule membrane. It localises to the endoplasmic reticulum membrane. The enzyme catalyses [E2 ubiquitin-conjugating enzyme]-S-ubiquitinyl-L-cysteine + [acceptor protein]-L-lysine = [E2 ubiquitin-conjugating enzyme]-L-cysteine + [acceptor protein]-N(6)-ubiquitinyl-L-lysine.. It functions in the pathway protein modification; protein ubiquitination. Its function is as follows. E3 ubiquitin-protein ligase which accepts ubiquitin from E2 ubiquitin-conjugating enzymes UBE2L3 and UBE2L6 in the form of a thioester and then directly transfers the ubiquitin to targeted substrates, such as UCKL1. Involved in the cytolytic activity of natural killer cells and cytotoxic T-cells. Protects against staurosporin-induced cell death. The sequence is that of E3 ubiquitin-protein ligase RNF19B (rnf19b) from Xenopus laevis (African clawed frog).